The sequence spans 1404 residues: DNA-directed RNA polymerase subunit beta' (1404 aa).

Zn(2+) is bound by residues C60, C62, C75, and C78. Positions 449, 451, and 453 each coordinate Mg(2+). Zn(2+) contacts are provided by C778, C852, C859, and C862. The segment at D1381 to E1404 is disordered. Positions L1384 to E1404 are enriched in acidic residues.

The protein belongs to the RNA polymerase beta' chain family. The RNAP catalytic core consists of 2 alpha, 1 beta, 1 beta' and 1 omega subunit. When a sigma factor is associated with the core the holoenzyme is formed, which can initiate transcription. Requires Mg(2+) as cofactor. Zn(2+) is required as a cofactor.

It catalyses the reaction RNA(n) + a ribonucleoside 5'-triphosphate = RNA(n+1) + diphosphate. Its function is as follows. DNA-dependent RNA polymerase catalyzes the transcription of DNA into RNA using the four ribonucleoside triphosphates as substrates. In Leptospira borgpetersenii serovar Hardjo-bovis (strain JB197), this protein is DNA-directed RNA polymerase subunit beta'.